A 446-amino-acid polypeptide reads, in one-letter code: Hercynine oxygenase (446 aa).

A Fe cation-binding site is contributed by His51. Residue 87-90 coordinates gamma-L-glutamyl-L-cysteine; it reads RASR. The Fe cation site is built by His134 and His138. Residues Asp416 and Arg420 each contribute to the gamma-L-glutamyl-L-cysteine site.

This sequence belongs to the EgtB family. In terms of assembly, monomer. It depends on Fe(2+) as a cofactor.

It carries out the reaction gamma-L-glutamyl-L-cysteine + hercynine + O2 = gamma-L-glutamyl-hercynylcysteine S-oxide + H2O. Its pathway is amino-acid biosynthesis; ergothioneine biosynthesis. Functionally, catalyzes the oxidative sulfurization of hercynine (N-alpha,N-alpha,N-alpha-trimethyl-L-histidine) into hercynyl-gamma-L-glutamyl-L-cysteine sulfoxide, a step in the biosynthesis pathway of ergothioneine. This is Hercynine oxygenase from Mycolicibacterium thermoresistibile (strain ATCC 19527 / DSM 44167 / CIP 105390 / JCM 6362 / NCTC 10409 / 316) (Mycobacterium thermoresistibile).